Here is a 336-residue protein sequence, read N- to C-terminus: Holliday junction branch migration complex subunit RuvB (336 aa).

The segment at 1 to 182 (MKERIVNLET…FGMSFRMQFY (182 aa)) is large ATPase domain (RuvB-L). ATP is bound by residues Leu-21, Arg-22, Gly-63, Lys-66, Thr-67, Ser-68, 129 to 131 (EDF), Arg-172, Tyr-182, and Arg-219. Residue Thr-67 coordinates Mg(2+). The tract at residues 183–253 (SPSELALIIK…ITLHALNELG (71 aa)) is small ATPAse domain (RuvB-S). Residues 256 to 336 (ELGFDEADLA…IPTLNPQTLF (81 aa)) form a head domain (RuvB-H) region. Positions 310 and 315 each coordinate DNA.

This sequence belongs to the RuvB family. In terms of assembly, homohexamer. Forms an RuvA(8)-RuvB(12)-Holliday junction (HJ) complex. HJ DNA is sandwiched between 2 RuvA tetramers; dsDNA enters through RuvA and exits via RuvB. An RuvB hexamer assembles on each DNA strand where it exits the tetramer. Each RuvB hexamer is contacted by two RuvA subunits (via domain III) on 2 adjacent RuvB subunits; this complex drives branch migration. In the full resolvosome a probable DNA-RuvA(4)-RuvB(12)-RuvC(2) complex forms which resolves the HJ.

Its subcellular location is the cytoplasm. The catalysed reaction is ATP + H2O = ADP + phosphate + H(+). In terms of biological role, the RuvA-RuvB-RuvC complex processes Holliday junction (HJ) DNA during genetic recombination and DNA repair, while the RuvA-RuvB complex plays an important role in the rescue of blocked DNA replication forks via replication fork reversal (RFR). RuvA specifically binds to HJ cruciform DNA, conferring on it an open structure. The RuvB hexamer acts as an ATP-dependent pump, pulling dsDNA into and through the RuvAB complex. RuvB forms 2 homohexamers on either side of HJ DNA bound by 1 or 2 RuvA tetramers; 4 subunits per hexamer contact DNA at a time. Coordinated motions by a converter formed by DNA-disengaged RuvB subunits stimulates ATP hydrolysis and nucleotide exchange. Immobilization of the converter enables RuvB to convert the ATP-contained energy into a lever motion, pulling 2 nucleotides of DNA out of the RuvA tetramer per ATP hydrolyzed, thus driving DNA branch migration. The RuvB motors rotate together with the DNA substrate, which together with the progressing nucleotide cycle form the mechanistic basis for DNA recombination by continuous HJ branch migration. Branch migration allows RuvC to scan DNA until it finds its consensus sequence, where it cleaves and resolves cruciform DNA. The chain is Holliday junction branch migration complex subunit RuvB from Helicobacter pylori (strain Shi470).